The sequence spans 1029 residues: Translation initiation factor IF-2 (1029 aa).

Residues 73-441 are disordered; sequence RELRSEEDDG…RQRRRERKRE (369 aa). 2 stretches are compositionally biased toward acidic residues: residues 106-121 and 148-177; these read TAEE…DEEE and AEAE…DEAE. Residues 183–196 are compositionally biased toward basic and acidic residues; the sequence is AADKDAAAIADEQK. Composition is skewed to acidic residues over residues 213–234, 242–258, and 279–322; these read TGEE…DAEA, TEAE…AEDV, and APDE…DEEG. Basic and acidic residues predominate over residues 358–372; the sequence is KDKDKDKSSKKDKKD. A compositionally biased stretch (basic residues) spans 373–386; sequence KSNKKSKSKGKKQK. Low complexity predominate over residues 400–411; sequence QTLQETLQELEQ. Over residues 417-427 the composition is skewed to basic residues; the sequence is RQRRRRRRRKR. The span at 428-441 shows a compositional bias: basic and acidic residues; the sequence is HEEERQRRRERKRE. Positions 524-696 constitute a tr-type G domain; the sequence is PRAPVVTVMG…LLQSEIMELK (173 aa). Residues 533-540 form a G1 region; that stretch reads GHVDHGKT. 533-540 contributes to the GTP binding site; it reads GHVDHGKT. Residues 558-562 are G2; it reads GITQH. The G3 stretch occupies residues 582-585; that stretch reads DTPG. GTP is bound by residues 582–586 and 636–639; these read DTPGH and NKMD. The segment at 636 to 639 is G4; that stretch reads NKMD. Residues 672 to 674 are G5; it reads SAK.

It belongs to the TRAFAC class translation factor GTPase superfamily. Classic translation factor GTPase family. IF-2 subfamily.

The protein localises to the cytoplasm. Its function is as follows. One of the essential components for the initiation of protein synthesis. Protects formylmethionyl-tRNA from spontaneous hydrolysis and promotes its binding to the 30S ribosomal subunits. Also involved in the hydrolysis of GTP during the formation of the 70S ribosomal complex. This Salinibacter ruber (strain DSM 13855 / M31) protein is Translation initiation factor IF-2.